The following is a 996-amino-acid chain: Alanine--tRNA ligase, chloroplastic/mitochondrial (996 aa).

Zn(2+) is bound by residues His-677, His-681, Cys-779, and His-783.

It belongs to the class-II aminoacyl-tRNA synthetase family. As to quaternary structure, monomer. The cofactor is Zn(2+).

It localises to the plastid. The protein localises to the chloroplast. It is found in the mitochondrion. The catalysed reaction is tRNA(Ala) + L-alanine + ATP = L-alanyl-tRNA(Ala) + AMP + diphosphate. Its function is as follows. Catalyzes the attachment of alanine to tRNA(Ala) in a two-step reaction: alanine is first activated by ATP to form Ala-AMP and then transferred to the acceptor end of tRNA(Ala). Also edits incorrectly charged tRNA(Ala) via its editing domain. This chain is Alanine--tRNA ligase, chloroplastic/mitochondrial, found in Oryza sativa subsp. japonica (Rice).